Consider the following 140-residue polypeptide: Profilin-1 (140 aa).

N-acetylalanine is present on alanine 2. Residue serine 28 is modified to Phosphoserine. Lysine 54 participates in a covalent cross-link: Glycyl lysine isopeptide (Lys-Gly) (interchain with G-Cter in SUMO2); alternate. Lysine 54 participates in a covalent cross-link: Glycyl lysine isopeptide (Lys-Gly) (interchain with G-Cter in ubiquitin); alternate. Position 57 is a phosphoserine (serine 57). At lysine 108 the chain carries N6-acetyllysine. Phosphotyrosine is present on tyrosine 129. Phosphoserine; by ROCK1 is present on serine 138.

This sequence belongs to the profilin family. Found in a complex with XPO6, Ran, ACTB and PFN1. Interacts with ACTB. Interacts with VASP. Interacts with HTT. Interacts with SH3BGRL. Occurs in many kinds of cells as a complex with monomeric actin in a 1:1 ratio. Interacts with ACTMAP. In terms of processing, phosphorylation at Ser-138 reduces its affinity for G-actin and blocks its interaction with HTT, reducing its ability to inhibit androgen receptor (AR) and HTT aggregation.

It localises to the cytoplasm. The protein localises to the cytoskeleton. Its function is as follows. Binds to actin and affects the structure of the cytoskeleton. At high concentrations, profilin prevents the polymerization of actin, whereas it enhances it at low concentrations. By binding to PIP2, it inhibits the formation of IP3 and DG. Inhibits androgen receptor (AR) and HTT aggregation and binding of G-actin is essential for its inhibition of AR. The sequence is that of Profilin-1 (PFN1) from Bos taurus (Bovine).